The chain runs to 543 residues: NXPE family member 4 (543 aa).

An N-terminal signal peptide occupies residues 1-26 (MKTLASRKSLWMLLFIVIFWVSFTVF). N-linked (GlcNAc...) asparagine glycosylation is found at Asn-91, Asn-159, and Asn-223.

This sequence belongs to the NXPE family.

It is found in the secreted. This is NXPE family member 4 (Nxpe4) from Mus musculus (Mouse).